The chain runs to 287 residues: Nucleotide-binding protein TGRD_433 (287 aa).

9–16 is an ATP binding site; it reads GMSGAGKS. 60–63 provides a ligand contact to GTP; sequence DSRA.

Belongs to the RapZ-like family.

Functionally, displays ATPase and GTPase activities. This is Nucleotide-binding protein TGRD_433 from Endomicrobium trichonymphae.